A 316-amino-acid chain; its full sequence is HPr kinase/phosphorylase (316 aa).

Active-site residues include His-143 and Lys-164. 158-165 (GEAGSGKS) is a binding site for ATP. Mg(2+) is bound at residue Ser-165. Catalysis depends on Asp-182, which acts as the Proton acceptor; for phosphorylation activity. Proton donor; for dephosphorylation activity. An important for the catalytic mechanism of both phosphorylation and dephosphorylation region spans residues 206–215 (LEVRGLGVLN). Glu-207 is a Mg(2+) binding site. The active site involves Arg-251. Residues 272–277 (PVMPGR) form an important for the catalytic mechanism of dephosphorylation region.

The protein belongs to the HPrK/P family. Homohexamer. Mg(2+) serves as cofactor.

It catalyses the reaction [HPr protein]-L-serine + ATP = [HPr protein]-O-phospho-L-serine + ADP + H(+). The enzyme catalyses [HPr protein]-O-phospho-L-serine + phosphate + H(+) = [HPr protein]-L-serine + diphosphate. Functionally, catalyzes the ATP- as well as the pyrophosphate-dependent phosphorylation of a specific serine residue in HPr, a phosphocarrier protein of the phosphoenolpyruvate-dependent sugar phosphotransferase system (PTS). HprK/P also catalyzes the pyrophosphate-producing, inorganic phosphate-dependent dephosphorylation (phosphorolysis) of seryl-phosphorylated HPr (P-Ser-HPr). The sequence is that of HPr kinase/phosphorylase from Xanthomonas axonopodis pv. citri (strain 306).